Reading from the N-terminus, the 96-residue chain is Small ribosomal subunit protein bS6 (96 aa).

Belongs to the bacterial ribosomal protein bS6 family.

Binds together with bS18 to 16S ribosomal RNA. The polypeptide is Small ribosomal subunit protein bS6 (Cutibacterium acnes (strain DSM 16379 / KPA171202) (Propionibacterium acnes)).